Consider the following 552-residue polypeptide: Probable beta-glucosidase btgE (552 aa).

The N-terminal stretch at 1–18 is a signal peptide; that stretch reads MRGAILATAAALAGTAMA. Positions 250 to 291 are disordered; the sequence is EPTSAPAAPSTTAVPATTTAAVPSTSSAAPSSSSTAPASTGA. Low complexity predominate over residues 251–289; it reads PTSAPAAPSTTAVPATTTAAVPSTSSAAPSSSSTAPAST. Glu-392 serves as the catalytic Proton donor. Glu-488 (nucleophile) is an active-site residue.

This sequence belongs to the glycosyl hydrolase 17 family.

The protein localises to the secreted. It is found in the cell wall. The enzyme catalyses Hydrolysis of terminal, non-reducing beta-D-glucosyl residues with release of beta-D-glucose.. The protein operates within glycan metabolism; cellulose degradation. Its function is as follows. Beta-glucosidases are one of a number of cellulolytic enzymes involved in the degradation of cellulosic biomass. Catalyzes the last step releasing glucose from the inhibitory cellobiose. The protein is Probable beta-glucosidase btgE (btgE) of Neosartorya fischeri (strain ATCC 1020 / DSM 3700 / CBS 544.65 / FGSC A1164 / JCM 1740 / NRRL 181 / WB 181) (Aspergillus fischerianus).